Consider the following 258-residue polypeptide: tRNA (guanine-N(7)-)-methyltransferase (258 aa).

S-adenosyl-L-methionine-binding positions include Gly76, 99-100 (EI), 132-133 (NA), and Leu152. Asp155 is a catalytic residue. Residue 230–232 (TEE) coordinates S-adenosyl-L-methionine.

The protein belongs to the class I-like SAM-binding methyltransferase superfamily. TrmB family.

It is found in the nucleus. It catalyses the reaction guanosine(46) in tRNA + S-adenosyl-L-methionine = N(7)-methylguanosine(46) in tRNA + S-adenosyl-L-homocysteine. It functions in the pathway tRNA modification; N(7)-methylguanine-tRNA biosynthesis. In terms of biological role, catalyzes the formation of N(7)-methylguanine at position 46 (m7G46) in tRNA. This Brugia malayi (Filarial nematode worm) protein is tRNA (guanine-N(7)-)-methyltransferase.